The chain runs to 261 residues: Adenosylcobinamide-GDP ribazoletransferase (261 aa).

5 consecutive transmembrane segments (helical) span residues 31–51 (YAIC…FLTF), 59–79 (LGDI…SGGI), 125–145 (FGMV…FFVV), 183–203 (VIYL…LTVV), and 240–260 (LMAG…TGHW).

It belongs to the CobS family. Requires Mg(2+) as cofactor.

Its subcellular location is the cell membrane. It carries out the reaction alpha-ribazole + adenosylcob(III)inamide-GDP = adenosylcob(III)alamin + GMP + H(+). The catalysed reaction is alpha-ribazole 5'-phosphate + adenosylcob(III)inamide-GDP = adenosylcob(III)alamin 5'-phosphate + GMP + H(+). The protein operates within cofactor biosynthesis; adenosylcobalamin biosynthesis; adenosylcobalamin from cob(II)yrinate a,c-diamide: step 7/7. Functionally, joins adenosylcobinamide-GDP and alpha-ribazole to generate adenosylcobalamin (Ado-cobalamin). Also synthesizes adenosylcobalamin 5'-phosphate from adenosylcobinamide-GDP and alpha-ribazole 5'-phosphate. This is Adenosylcobinamide-GDP ribazoletransferase from Lachnoclostridium phytofermentans (strain ATCC 700394 / DSM 18823 / ISDg) (Clostridium phytofermentans).